Consider the following 1335-residue polypeptide: Bifunctional autolysin (1335 aa).

An N-terminal signal peptide occupies residues 1–29 (MAKKFNYKLPSMVALTLFGTAFTAHQANA). Disordered stretches follow at residues 51-88 (QAEK…QSTT), 100-262 (NEIS…KYKE), and 514-535 (WGTT…NNKL). 5 stretches are compositionally biased toward polar residues: residues 58 to 88 (EVTQ…QSTT), 100 to 127 (NEIS…VTKN), 143 to 155 (TDTN…QSVA), 176 to 223 (TASQ…NASG), and 244 to 258 (SLNN…TTSY). The interval 303–863 (VSSQKTSSLP…LSTQSTPAPK (561 aa)) is N-acetylmuramoyl-L-alanine amidase. Over residues 515-531 (GTTSTKPSQPSKPSGGT) the composition is skewed to low complexity. GW domains lie at 533–610 (NKLT…YNTA), 612–686 (APVK…TASK), 700–774 (TVTN…YNTA), 776–850 (SPVK…APSK), 868–943 (STQT…TQNI), 945–1020 (KQTQ…QNST), and 1023–1096 (QSTP…KEKI). Residues 864 to 1335 (QVKPSTQTVN…GKYFEIPIYK (472 aa)) are endo-beta-N-acetylglucosaminidase.

The protein in the N-terminal section; belongs to the N-acetylmuramoyl-L-alanine amidase 2 family. It in the C-terminal section; belongs to the glycosyl hydrolase 73 family. Oligomer; forms a ring structure at the cell surface which is important for efficient partitioning of daughter cells after cell division. In terms of processing, undergoes proteolytic processing to generate the two extracellular lytic enzymes, probably at the septal region on the cell surface.

It localises to the secreted. The enzyme catalyses Hydrolyzes the link between N-acetylmuramoyl residues and L-amino acid residues in certain cell-wall glycopeptides.. It catalyses the reaction an N(4)-(oligosaccharide-(1-&gt;3)-[oligosaccharide-(1-&gt;6)]-beta-D-Man-(1-&gt;4)-beta-D-GlcNAc-(1-&gt;4)-alpha-D-GlcNAc)-L-asparaginyl-[protein] + H2O = an oligosaccharide-(1-&gt;3)-[oligosaccharide-(1-&gt;6)]-beta-D-Man-(1-&gt;4)-D-GlcNAc + N(4)-(N-acetyl-beta-D-glucosaminyl)-L-asparaginyl-[protein]. Its function is as follows. Endohydrolysis of the di-N-acetylchitobiosyl unit in high-mannose glycopeptides and glycoproteins containing the -[(Man)5(GlcNAc)2]-Asn structure. One N-acetyl-D-glucosamine residue remains attached to the protein; the rest of the oligosaccharide is released intact. Cleaves the peptidoglycan connecting the daughter cells at the end of the cell division cycle, resulting in the separation of the two newly divided cells. Acts as an autolysin in penicillin-induced lysis. This chain is Bifunctional autolysin (atl), found in Staphylococcus epidermidis (strain ATCC 12228 / FDA PCI 1200).